We begin with the raw amino-acid sequence, 337 residues long: Biotin synthase (337 aa).

One can recognise a Radical SAM core domain in the interval 39–267 (QEVQVCTLLS…KAMVRLSAGR (229 aa)). 3 residues coordinate [4Fe-4S] cluster: Cys54, Cys58, and Cys61. Cys98, Cys130, Cys190, and Arg262 together coordinate [2Fe-2S] cluster.

This sequence belongs to the radical SAM superfamily. Biotin synthase family. As to quaternary structure, homodimer. [4Fe-4S] cluster serves as cofactor. [2Fe-2S] cluster is required as a cofactor.

The enzyme catalyses (4R,5S)-dethiobiotin + (sulfur carrier)-SH + 2 reduced [2Fe-2S]-[ferredoxin] + 2 S-adenosyl-L-methionine = (sulfur carrier)-H + biotin + 2 5'-deoxyadenosine + 2 L-methionine + 2 oxidized [2Fe-2S]-[ferredoxin]. The protein operates within cofactor biosynthesis; biotin biosynthesis; biotin from 7,8-diaminononanoate: step 2/2. In terms of biological role, catalyzes the conversion of dethiobiotin (DTB) to biotin by the insertion of a sulfur atom into dethiobiotin via a radical-based mechanism. This is Biotin synthase from Cytophaga hutchinsonii (strain ATCC 33406 / DSM 1761 / CIP 103989 / NBRC 15051 / NCIMB 9469 / D465).